The sequence spans 458 residues: Cell death abnormality protein 8 (458 aa).

Residues 1–45 lie on the Cytoplasmic side of the membrane; it reads MFLKKHKSKLLLVPRDEEQEDAGIVAVLTDRIPSVLLVRWFDLFC. A helical membrane pass occupies residues 46-66; the sequence is FGFAMCSYALDFFSDIGIAIF. At 67-77 the chain is on the extracellular side; the sequence is HFWAGRYLSGS. The chain crosses the membrane as a helical span at residues 78–98; the sequence is LVLAFALLPSVIINIISMVWM. At 99 to 123 the chain is on the cytoplasmic side; that stretch reads LDDEMHWKRRAHPRRTGTFELNQKR. Residues 124-144 form a helical membrane-spanning segment; that stretch reads FIPLSKMIVLCICQMGPLFWY. The Extracellular segment spans residues 145–219; the sequence is YKALYYGWMF…YYQTGTYPYW (75 aa). Residues 220-240 form a helical membrane-spanning segment; the sequence is LYFQAASLLLSIISISWSVVV. Residues 241–274 are Cytoplasmic-facing; it reads QNRSLRMIRDDKVNIWPHEAVLQFCWRFLTILAR. 2 helical membrane-spanning segments follow: residues 275 to 295 and 296 to 316; these read IITLVALVLIFGINVVPLISV and HLLVTLVHVIFLQAIHIDACT. Position 317 (histidine 317) is a topological domain, extracellular. Residues 318–338 traverse the membrane as a helical segment; it reads IEKLLLLINTFIHIFIPFNMV. Over 339 to 353 the chain is Cytoplasmic; sequence EGNTRWRYLTAYSVE. The helical transmembrane segment at 354–374 threads the bilayer; that stretch reads FIEMMLVCWLLPLSLNTFPYI. Residues 375 to 378 are Extracellular-facing; the sequence is EKVQ. A helical membrane pass occupies residues 379–399; that stretch reads VGVPISFIAGIAIMMMYYQFF. The Cytoplasmic portion of the chain corresponds to 400 to 458; sequence HPNRRQLIVTQSQEDLSLNVQKSVETLTPKLESSLEISGEQNTSQDLVSELLLDVEHEN.

This sequence belongs to the XK family. In terms of processing, cleavage by ced-3 activates ced-8 function in promoting phosphatidylserine exposure at the surface of apoptotic cells.

The protein localises to the cell membrane. It carries out the reaction a 1,2-diacyl-sn-glycero-3-phospho-L-serine(in) = a 1,2-diacyl-sn-glycero-3-phospho-L-serine(out). In terms of biological role, phospholipid scramblase that acts downstream of ced-9 and caspase ced-3 to promote phosphatidylserine exposure on apoptotic cell surface. Phosphatidylserine is a specific marker only present at the surface of apoptotic cells and acts as a specific signal for engulfment. Regulates apoptosis kinetics during embryonic development. Not required for engulfment of germ cell corpses. The sequence is that of Cell death abnormality protein 8 from Caenorhabditis elegans.